Here is a 198-residue protein sequence, read N- to C-terminus: Recombination protein RecR (198 aa).

The C4-type zinc finger occupies 57–72; sequence CSVCGHITEEDPCYIC. One can recognise a Toprim domain in the interval 80-175; sequence SVICVVEDDK…KVTRLAQGLS (96 aa).

This sequence belongs to the RecR family.

In terms of biological role, may play a role in DNA repair. It seems to be involved in an RecBC-independent recombinational process of DNA repair. It may act with RecF and RecO. In Staphylococcus carnosus (strain TM300), this protein is Recombination protein RecR.